A 163-amino-acid polypeptide reads, in one-letter code: Nucleotide-binding protein Cj0374 (163 aa).

The protein belongs to the YajQ family.

Nucleotide-binding protein. The protein is Nucleotide-binding protein Cj0374 of Campylobacter jejuni subsp. jejuni serotype O:2 (strain ATCC 700819 / NCTC 11168).